We begin with the raw amino-acid sequence, 254 residues long: 3-deoxy-manno-octulosonate cytidylyltransferase (254 aa).

The protein belongs to the KdsB family.

The protein resides in the cytoplasm. It carries out the reaction 3-deoxy-alpha-D-manno-oct-2-ulosonate + CTP = CMP-3-deoxy-beta-D-manno-octulosonate + diphosphate. It participates in nucleotide-sugar biosynthesis; CMP-3-deoxy-D-manno-octulosonate biosynthesis; CMP-3-deoxy-D-manno-octulosonate from 3-deoxy-D-manno-octulosonate and CTP: step 1/1. Its pathway is bacterial outer membrane biogenesis; lipopolysaccharide biosynthesis. Activates KDO (a required 8-carbon sugar) for incorporation into bacterial lipopolysaccharide in Gram-negative bacteria. This chain is 3-deoxy-manno-octulosonate cytidylyltransferase, found in Pseudomonas aeruginosa (strain UCBPP-PA14).